The primary structure comprises 249 residues: ATP synthase subunit a, chloroplastic (249 aa).

Helical transmembrane passes span 38–58 (AQVLITSWIVIAILLSLAVLA), 97–117 (VPFIGTMFLFIFVSNWSGALL), 136–156 (INTTVALALLTSVAYFYAGLH), 201–221 (LVVAVLISLVPLVVPIPMMFL), and 222–242 (GLFTSAIQALIFATLAAAYIG).

Belongs to the ATPase A chain family. F-type ATPases have 2 components, CF(1) - the catalytic core - and CF(0) - the membrane proton channel. CF(1) has five subunits: alpha(3), beta(3), gamma(1), delta(1), epsilon(1). CF(0) has four main subunits: a, b, b' and c.

Its subcellular location is the plastid. The protein localises to the chloroplast thylakoid membrane. Functionally, key component of the proton channel; it plays a direct role in the translocation of protons across the membrane. This is ATP synthase subunit a, chloroplastic from Physcomitrium patens (Spreading-leaved earth moss).